The chain runs to 320 residues: uncharacterized protein (320 aa).

The N-terminal stretch at 1 to 23 is a signal peptide; the sequence is MKLNLRFPSYFLPVVAASAFLVS. The N-palmitoyl cysteine moiety is linked to residue Cys24. The S-diacylglycerol cysteine moiety is linked to residue Cys24. The disordered stretch occupies residues 160 to 181; the sequence is KNHEHGHTHKNGETHEHDHDHH.

The protein localises to the cell membrane. This is an uncharacterized protein from Mycoplasma pneumoniae (strain ATCC 29342 / M129 / Subtype 1) (Mycoplasmoides pneumoniae).